A 120-amino-acid polypeptide reads, in one-letter code: Secreted RxLR effector protein 29 (120 aa).

The signal sequence occupies residues 1 to 21 (MRRTAFIVLSLVALIAPCVTS). Positions 47-64 (RHLRSEANGRLAVVDEEK) match the RxLR-dEER motif.

It belongs to the RxLR effector family.

It is found in the secreted. It localises to the host cytoplasm. The protein localises to the host nucleus. In terms of biological role, effector that acts as a broad suppressor of cell death to interrupt plant immunity. Inhibits cell death induced by cell death-inducing proteins, including the PAMP elicitor INF1 from P.infestans. This chain is Secreted RxLR effector protein 29, found in Plasmopara viticola (Downy mildew of grapevine).